The following is a 942-amino-acid chain: Glutamyl aminopeptidase (942 aa).

Over 1–14 (MSTDSKRYCIKTKH) the chain is Cytoplasmic. The chain crosses the membrane as a helical; Signal-anchor for type II membrane protein span at residues 15-35 (VAIICAAVVAVGLIVGLSVGL). The Extracellular portion of the chain corresponds to 36-942 (TRSCDSKDGG…RDTIRDWFFN (907 aa)). Positions 40 to 74 (DSKDGGQGTTQSPSHLPPTSSPPQDQGVCPASEDE) are disordered. Asn-110, Asn-114, and Asn-187 each carry an N-linked (GlcNAc...) asparagine glycan. Glu-213 is a substrate binding site. Asn-314 is a glycosylation site (N-linked (GlcNAc...) asparagine). 347–351 (GAMEN) contributes to the substrate binding site. N-linked (GlcNAc...) asparagine glycosylation occurs at Asn-367. A Zn(2+)-binding site is contributed by His-383. Catalysis depends on Glu-384, which acts as the Proton acceptor. Zn(2+) contacts are provided by His-387 and Glu-406. N-linked (GlcNAc...) asparagine glycans are attached at residues Asn-557, Asn-579, Asn-587, Asn-597, Asn-632, Asn-668, Asn-753, Asn-786, and Asn-791. Residue Arg-877 coordinates substrate.

Belongs to the peptidase M1 family. Homodimer; disulfide-linked. Zn(2+) is required as a cofactor.

Its subcellular location is the cell membrane. It catalyses the reaction Release of N-terminal glutamate (and to a lesser extent aspartate) from a peptide.. Substrate specificity is modulated by calcium which enhances the enzymatic activity for cleavage of acidic residues while reducing its activity with basic residues. Inhibited by aminopeptidase inhibitors amastatin and bestatin. Its function is as follows. Regulates central hypertension through its calcium-modulated preference to cleave N-terminal acidic residues from peptides such as angiotensin II. The protein is Glutamyl aminopeptidase (ENPEP) of Sus scrofa (Pig).